The following is a 519-amino-acid chain: Dideacetyl fusicoccin A C-19 hydroxylase (519 aa).

The helical transmembrane segment at L16 to S36 threads the bilayer. N-linked (GlcNAc...) asparagine glycans are attached at residues N177, N327, N414, and N432. Heme is bound at residue C454.

The protein belongs to the cytochrome P450 family. Heme is required as a cofactor.

It localises to the membrane. It participates in mycotoxin biosynthesis. Functionally, cytochrome P450 monooxygenase; part of the 2 gene clusters that mediate the biosynthesis of fusicoccins, diterpene glucosides that display phytohormone-like activity and function as potent activators of plasma membrane H(+)-ATPases in plants by modifying 14-3-3 proteins and cause the plant disease constriction canker. The first step in the pathway is performed by the fusicoccadiene synthase PaFS that possesses both prenyl transferase and terpene cyclase activity, converting isopentenyl diphosphate and dimethylallyl diphosphate into geranylgeranyl diphosphate (GGDP) and successively converting GGDP into fusicocca-2,10(14)-diene, a precursor for fusicoccin H. The second step is the oxidation at the C-8 position by the cytochrome P450 monooxygenase PaP450-2 to yield fusicocca-2,10(14)-diene-8-beta-ol. The cytochrome P450 monooxygenase PaP450-1 then catalyzes the hydroxylation at the C-16 position to produce fusicocca-2,10(14)-diene-8-beta,16-diol. The dioxygenase fc-dox then catalyzes the 16-oxydation of fusicocca-2,10(14)-diene-8-beta,16-diol to yield an aldehyde (8-beta-hydroxyfusicocca-1,10(14)-dien-16-al). The short-chain dehydrogenase/reductase fc-sdr catalyzes the reduction of the aldehyde to yield fusicocca-1,10(14)-diene-8-beta,16-diol. The next step is the hydroxylation at C-9 performed by the cytochrome P450 monooxygenase PaP450-3 that leads to fusicoccin H aglycon which is glycosylated to fusicoccin H by the O-glycosyltransferase PaGT. Hydroxylation at C-12 by the cytochrome P450 monooxygenase PaP450-4 leads then to the production of fusicoccin Q and is followed by methylation by the O-methyltransferase PaMT to yield fusicoccin P. Fusicoccin P is further converted to fusicoccin J via prenylation by the O-glucose prenyltransferase PaPT. Cytochrome P450 monooxygenase PaP450-5 then performs hydroxylation at C-19 to yield dideacetyl-fusicoccin A which is acetylated to 3'-O-deacetyl-fusicoccin A by the O-acetyltransferase PaAT-2. Finally, a another acetylation by the O-acetyltransferase PaAT-1 yields fusicoccin A. This is Dideacetyl fusicoccin A C-19 hydroxylase from Phomopsis amygdali (Fusicoccum amygdali).